Consider the following 154-residue polypeptide: Lipoprotein signal peptidase (154 aa).

2 consecutive transmembrane segments (helical) span residues 57 to 77 (LVLS…MIKY) and 86 to 103 (ISLS…YDRV). Catalysis depends on residues Asp-110 and Asp-129. A helical membrane pass occupies residues 124–144 (VFNVADICVVVGTIMIAIFIV).

Belongs to the peptidase A8 family.

Its subcellular location is the cell membrane. It carries out the reaction Release of signal peptides from bacterial membrane prolipoproteins. Hydrolyzes -Xaa-Yaa-Zaa-|-(S,diacylglyceryl)Cys-, in which Xaa is hydrophobic (preferably Leu), and Yaa (Ala or Ser) and Zaa (Gly or Ala) have small, neutral side chains.. Its pathway is protein modification; lipoprotein biosynthesis (signal peptide cleavage). Its function is as follows. This protein specifically catalyzes the removal of signal peptides from prolipoproteins. This is Lipoprotein signal peptidase from Clostridium acetobutylicum (strain ATCC 824 / DSM 792 / JCM 1419 / IAM 19013 / LMG 5710 / NBRC 13948 / NRRL B-527 / VKM B-1787 / 2291 / W).